The sequence spans 316 residues: Protein FLUORESCENT IN BLUE LIGHT, chloroplastic (316 aa).

A chloroplast-targeting transit peptide spans methionine 1 to arginine 26. The chain crosses the membrane as a helical span at residues methionine 125 to leucine 145. Residues leucine 144–serine 175 are a coiled coil. TPR repeat units follow at residues leucine 203–leucine 236, lysine 243–glutamate 276, and threonine 283–aspartate 316.

As to quaternary structure, part of the FLU-containing chloroplast membrane complex composed of FLU, CRD1, PORB, PORC, CHLP and HEMA1. Interacts with HEMA1 (via C-terminus) only in the absence of light. No interaction with HEMA2.

The protein localises to the plastid. Its subcellular location is the chloroplast membrane. The protein resides in the chloroplast thylakoid membrane. Functionally, negative regulator of tetrapyrrole biosynthesis (including chlorophyll) in chloroplasts, probably via HEMA1 repression. Inhibits especially the magnesium ion Mg(2+) branch of tetrapyrrole biosynthesis, but independently of heme. The chain is Protein FLUORESCENT IN BLUE LIGHT, chloroplastic (FLU) from Arabidopsis thaliana (Mouse-ear cress).